Consider the following 411-residue polypeptide: Multifunctional CCA protein (411 aa).

Positions 8 and 11 each coordinate ATP. CTP-binding residues include Gly-8 and Arg-11. Positions 21 and 23 each coordinate Mg(2+). 3 residues coordinate ATP: Arg-91, Arg-143, and Arg-146. The CTP site is built by Arg-91, Arg-143, and Arg-146. In terms of domain architecture, HD spans 232 to 333 (TGVHVMMVID…MRLLERCDAL (102 aa)).

It belongs to the tRNA nucleotidyltransferase/poly(A) polymerase family. Bacterial CCA-adding enzyme type 1 subfamily. In terms of assembly, monomer. Can also form homodimers and oligomers. Mg(2+) is required as a cofactor. Ni(2+) serves as cofactor.

It catalyses the reaction a tRNA precursor + 2 CTP + ATP = a tRNA with a 3' CCA end + 3 diphosphate. It carries out the reaction a tRNA with a 3' CCA end + 2 CTP + ATP = a tRNA with a 3' CCACCA end + 3 diphosphate. In terms of biological role, catalyzes the addition and repair of the essential 3'-terminal CCA sequence in tRNAs without using a nucleic acid template. Adds these three nucleotides in the order of C, C, and A to the tRNA nucleotide-73, using CTP and ATP as substrates and producing inorganic pyrophosphate. tRNA 3'-terminal CCA addition is required both for tRNA processing and repair. Also involved in tRNA surveillance by mediating tandem CCA addition to generate a CCACCA at the 3' terminus of unstable tRNAs. While stable tRNAs receive only 3'-terminal CCA, unstable tRNAs are marked with CCACCA and rapidly degraded. The chain is Multifunctional CCA protein from Cupriavidus necator (strain ATCC 17699 / DSM 428 / KCTC 22496 / NCIMB 10442 / H16 / Stanier 337) (Ralstonia eutropha).